Consider the following 59-residue polypeptide: Cecropin-A1 (59 aa).

Residues 1–23 (MNFTKLFAIVLLAALVLLGQTEA) form the signal peptide.

This sequence belongs to the cecropin family.

The protein resides in the secreted. Its function is as follows. Cecropins have lytic and antibacterial activity against several Gram-positive and Gram-negative bacteria. This is Cecropin-A1 (CECA1) from Aedes albopictus (Asian tiger mosquito).